The chain runs to 231 residues: Regulatory factor X-associated protein (231 aa).

The tract at residues 1 to 163 (MEAQAVPEGS…GNVKLEESTD (163 aa)) is disordered. Positions 50–65 (ADAEDEAGDDDADLLD) are enriched in acidic residues. Residues 115-138 (KQRKPWMCKKHRNKMYKDKYKKKK) are compositionally biased toward basic residues. A Nuclear localization signal motif is present at residues 123–138 (KKHRNKMYKDKYKKKK). A Glycyl lysine isopeptide (Lys-Gly) (interchain with G-Cter in SUMO2) cross-link involves residue K157.

In terms of assembly, RFX consists of at least 3 different subunits; RFXAP, RFX5 and RFX-B/RFXANK; with each subunit representing a separate complementation group. RFX forms cooperative DNA binding complexes with X2BP and CBF/NF-Y. RFX associates with CIITA to form an active transcriptional complex. In terms of processing, phosphorylated.

It is found in the nucleus. Part of the RFX complex that binds to the X-box of MHC II promoters. The sequence is that of Regulatory factor X-associated protein (Rfxap) from Mus musculus (Mouse).